The sequence spans 708 residues: Ubiquitin thioesterase Zranb1 (708 aa).

The segment at 3–33 adopts a RanBP2-type 1 zinc-finger fold; that stretch reads EHGIKWACEYCTYENWPSAIKCTMCRAQRPS. Zn(2+)-binding residues include cysteine 10, cysteine 13, cysteine 24, and cysteine 27. Residues 38–73 form a disordered region; the sequence is TEDPFKSGSSDVGRDWDPSSTEGGSSPLICPDSSAR. RanBP2-type zinc fingers lie at residues 84 to 113 and 149 to 178; these read NANK…QRRT and RTQH…PRPN. Residues cysteine 90, cysteine 93, cysteine 104, cysteine 107, cysteine 155, cysteine 158, cysteine 169, and cysteine 172 each contribute to the Zn(2+) site. The disordered stretch occupies residues 202–224; that stretch reads RWRGGCSSGNSQRRSPPTTKRDS. Residues 209 to 219 are compositionally biased toward polar residues; that stretch reads SGNSQRRSPPT. ANK repeat units follow at residues 260–290 and 313–340; these read KKTD…SGGD and YTLV…QQAA. The region spanning 432–592 is the OTU domain; the sequence is LYALWNRTAG…RGHFSALVAM (161 aa). Cysteine 443 (nucleophile) is an active-site residue. The Proton acceptor role is filled by histidine 585.

This sequence belongs to the peptidase C64 family. Interacts with TRAF6. Interacts with APC.

Its subcellular location is the cytoplasm. The protein resides in the nucleus. It catalyses the reaction Thiol-dependent hydrolysis of ester, thioester, amide, peptide and isopeptide bonds formed by the C-terminal Gly of ubiquitin (a 76-residue protein attached to proteins as an intracellular targeting signal).. Ubiquitin thioesterase, which specifically hydrolyzes 'Lys-29'-linked and 'Lys-33'-linked diubiquitin. Also cleaves 'Lys-63'-linked chains, but with 40-fold less efficiency compared to 'Lys-29'-linked ones. Positive regulator of the Wnt signaling pathway that deubiquitinates APC protein, a negative regulator of Wnt-mediated transcription. Acts as a regulator of autophagy by mediating deubiquitination of PIK3C3/VPS34, thereby promoting autophagosome maturation. Plays a role in the regulation of cell morphology and cytoskeletal organization. Required in the stress fiber dynamics and cell migration. This chain is Ubiquitin thioesterase Zranb1, found in Mus musculus (Mouse).